Consider the following 206-residue polypeptide: MAVRSKSSKAWLHEHVNDHYVHMAQKDGYRARAAYKLLEINEKDKLIKPGTVLADLGSAPGSWSQVAAKLTGTSGAVFALDILPMEAIGGVSFIQGDFRENDVLAQFETLLDNRPLDLVICDMAPNMSGNAVSDQARSFYLCELALDFASQHLKTGGSFLVKVFQGAGYQEYMAAMREIFGTVQTRKPEASRNRSSEIYLLGKNKR.

Residues Gly-61, Trp-63, Asp-81, Asp-97, and Asp-122 each contribute to the S-adenosyl-L-methionine site. The Proton acceptor role is filled by Lys-162.

This sequence belongs to the class I-like SAM-binding methyltransferase superfamily. RNA methyltransferase RlmE family.

It localises to the cytoplasm. It catalyses the reaction uridine(2552) in 23S rRNA + S-adenosyl-L-methionine = 2'-O-methyluridine(2552) in 23S rRNA + S-adenosyl-L-homocysteine + H(+). Its function is as follows. Specifically methylates the uridine in position 2552 of 23S rRNA at the 2'-O position of the ribose in the fully assembled 50S ribosomal subunit. In Neisseria meningitidis serogroup C (strain 053442), this protein is Ribosomal RNA large subunit methyltransferase E.